The primary structure comprises 93 residues: Large ribosomal subunit protein bL27 (93 aa).

The propeptide occupies Met1–Phe10. A disordered region spans residues Lys14–Asp36. Residues Asn21–Asp36 show a composition bias toward basic and acidic residues.

This sequence belongs to the bacterial ribosomal protein bL27 family. The N-terminus is cleaved by ribosomal processing cysteine protease Prp.

In Mycoplasma capricolum subsp. capricolum (strain California kid / ATCC 27343 / NCTC 10154), this protein is Large ribosomal subunit protein bL27.